Here is a 153-residue protein sequence, read N- to C-terminus: Protein Smg homolog (153 aa).

It belongs to the Smg family.

This chain is Protein Smg homolog, found in Neisseria meningitidis serogroup B (strain ATCC BAA-335 / MC58).